Reading from the N-terminus, the 289-residue chain is Ribosome-inactivating protein alpha-trichosanthin (289 aa).

The N-terminal stretch at 1–23 (MIRFLVLSLLILTLFLTTPAVEG) is a signal peptide. Residue glutamate 183 is part of the active site. The propeptide at 271-289 (AMDDDVPMTQSFGCGSYAI) is removed in mature form.

It belongs to the ribosome-inactivating protein family. Type 1 RIP subfamily.

It catalyses the reaction Endohydrolysis of the N-glycosidic bond at one specific adenosine on the 28S rRNA.. Its function is as follows. Inactivates eukaryotic 60S ribosomal subunits. This Trichosanthes kirilowii (Chinese snake gourd) protein is Ribosome-inactivating protein alpha-trichosanthin.